The primary structure comprises 392 residues: Pectate lyase 3 (392 aa).

An N-terminal signal peptide occupies residues 1-25; it reads MGIKHCCYILYFTLALVTLLQPVRS. N-linked (GlcNAc...) asparagine glycosylation is present at N37. A disulfide bridge connects residues C54 and C71. Positions 194, 218, and 222 each coordinate Ca(2+). Residue R270 is part of the active site.

Belongs to the polysaccharide lyase 1 family. Amb a subfamily. In terms of assembly, monomer. The cofactor is Ca(2+). The N-terminus is blocked. In terms of tissue distribution, pollen and flowers.

It carries out the reaction Eliminative cleavage of (1-&gt;4)-alpha-D-galacturonan to give oligosaccharides with 4-deoxy-alpha-D-galact-4-enuronosyl groups at their non-reducing ends.. Its pathway is glycan metabolism; pectin degradation; 2-dehydro-3-deoxy-D-gluconate from pectin: step 2/5. Functionally, has pectate lyase activity. This Ambrosia artemisiifolia (Common ragweed) protein is Pectate lyase 3.